A 164-amino-acid polypeptide reads, in one-letter code: Cyanate hydratase (164 aa).

Residues Arg90, Glu93, and Ser116 contribute to the active site.

Belongs to the cyanase family.

It catalyses the reaction cyanate + hydrogencarbonate + 3 H(+) = NH4(+) + 2 CO2. Functionally, catalyzes the reaction of cyanate with bicarbonate to produce ammonia and carbon dioxide. This Ricinus communis (Castor bean) protein is Cyanate hydratase.